The primary structure comprises 179 residues: Ubiquitin-conjugating enzyme E2 C (179 aa).

Residues 1-31 are disordered; the sequence is MASQNRDPVAASVAAARKGAEPSGGAARGPV. Ala-2 bears the N-acetylalanine mark. Ser-3 is modified (phosphoserine). Residues 30-175 enclose the UBC core domain; it reads PVGKRLQQEL…LQETYSKQVS (146 aa). Cys-114 serves as the catalytic Glycyl thioester intermediate.

This sequence belongs to the ubiquitin-conjugating enzyme family. Component of the APC/C complex, composed of at least 14 distinct subunits that assemble into a complex of at least 19 chains with a combined molecular mass of around 1.2 MDa. Within this complex, directly interacts with ANAPC2. In terms of processing, autoubiquitinated by the APC/C complex, leading to its degradation by the proteasome. Its degradation plays a central role in APC/C regulation, allowing cyclin-A accumulation before S phase entry. APC/C substrates inhibit the autoubiquitination of UBE2C/UBCH10 but not its E2 function, hence APC/C remaining active until its substrates have been destroyed.

The catalysed reaction is S-ubiquitinyl-[E1 ubiquitin-activating enzyme]-L-cysteine + [E2 ubiquitin-conjugating enzyme]-L-cysteine = [E1 ubiquitin-activating enzyme]-L-cysteine + S-ubiquitinyl-[E2 ubiquitin-conjugating enzyme]-L-cysteine.. It catalyses the reaction S-ubiquitinyl-[E1 ubiquitin-activating enzyme]-L-cysteine + [acceptor protein]-L-lysine = [E1 ubiquitin-activating enzyme]-L-cysteine + N(6)-monoubiquitinyl-[acceptor protein]-L-lysine.. The protein operates within protein modification; protein ubiquitination. Its function is as follows. Accepts ubiquitin from the E1 complex and catalyzes its covalent attachment to other proteins. In vitro catalyzes 'Lys-11'- and 'Lys-48'-linked polyubiquitination. Acts as an essential factor of the anaphase promoting complex/cyclosome (APC/C), a cell cycle-regulated ubiquitin ligase that controls progression through mitosis. Acts by initiating 'Lys-11'-linked polyubiquitin chains on APC/C substrates, leading to the degradation of APC/C substrates by the proteasome and promoting mitotic exit. This chain is Ubiquitin-conjugating enzyme E2 C (UBE2C), found in Bos taurus (Bovine).